The primary structure comprises 353 residues: DNA integrity scanning protein DisA (353 aa).

The DAC domain occupies 6 to 144; that stretch reads DKELMNILKI…GGIKYVLRDS (139 aa). Residues Gly73, Leu91, and 104–108 contribute to the ATP site; that span reads TRHRT.

It belongs to the DisA family. As to quaternary structure, homooctamer. Requires Mg(2+) as cofactor.

It catalyses the reaction 2 ATP = 3',3'-c-di-AMP + 2 diphosphate. Functionally, participates in a DNA-damage check-point that is active prior to asymmetric division when DNA is damaged. DisA forms globular foci that rapidly scan along the chromosomes during sporulation, searching for lesions. When a lesion is present, DisA pauses at the lesion site. This triggers a cellular response that culminates in a temporary block in sporulation initiation. Its function is as follows. Also has diadenylate cyclase activity, catalyzing the condensation of 2 ATP molecules into cyclic di-AMP (c-di-AMP). c-di-AMP acts as a signaling molecule that couples DNA integrity with progression of sporulation. The rise in c-di-AMP level generated by DisA while scanning the chromosome, operates as a positive signal that advances sporulation; upon encountering a lesion, the DisA focus arrests at the damaged site and halts c-di-AMP synthesis. The polypeptide is DNA integrity scanning protein DisA (Clostridium botulinum (strain Okra / Type B1)).